We begin with the raw amino-acid sequence, 253 residues long: 5-oxoprolinase subunit A (253 aa).

This sequence belongs to the LamB/PxpA family. In terms of assembly, forms a complex composed of PxpA, PxpB and PxpC.

It carries out the reaction 5-oxo-L-proline + ATP + 2 H2O = L-glutamate + ADP + phosphate + H(+). Its function is as follows. Catalyzes the cleavage of 5-oxoproline to form L-glutamate coupled to the hydrolysis of ATP to ADP and inorganic phosphate. In Syntrophobacter fumaroxidans (strain DSM 10017 / MPOB), this protein is 5-oxoprolinase subunit A.